Reading from the N-terminus, the 133-residue chain is ATP synthase epsilon chain (133 aa).

Belongs to the ATPase epsilon chain family. As to quaternary structure, F-type ATPases have 2 components, CF(1) - the catalytic core - and CF(0) - the membrane proton channel. CF(1) has five subunits: alpha(3), beta(3), gamma(1), delta(1), epsilon(1). CF(0) has three main subunits: a, b and c.

Its subcellular location is the cell membrane. Its function is as follows. Produces ATP from ADP in the presence of a proton gradient across the membrane. The protein is ATP synthase epsilon chain of Geobacillus thermodenitrificans (strain NG80-2).